The primary structure comprises 289 residues: Dihydropteroate synthase (289 aa).

The region spanning T28 to K282 is the Pterin-binding domain. N35 provides a ligand contact to Mg(2+). (7,8-dihydropterin-6-yl)methyl diphosphate is bound by residues T75, D109, N128, D199, K235, and R270–H272.

This sequence belongs to the DHPS family. The cofactor is Mg(2+).

It catalyses the reaction (7,8-dihydropterin-6-yl)methyl diphosphate + 4-aminobenzoate = 7,8-dihydropteroate + diphosphate. Its pathway is cofactor biosynthesis; tetrahydrofolate biosynthesis; 7,8-dihydrofolate from 2-amino-4-hydroxy-6-hydroxymethyl-7,8-dihydropteridine diphosphate and 4-aminobenzoate: step 1/2. In terms of biological role, catalyzes the condensation of para-aminobenzoate (pABA) with 6-hydroxymethyl-7,8-dihydropterin diphosphate (DHPt-PP) to form 7,8-dihydropteroate (H2Pte), the immediate precursor of folate derivatives. The chain is Dihydropteroate synthase (folP) from Synechocystis sp. (strain ATCC 27184 / PCC 6803 / Kazusa).